We begin with the raw amino-acid sequence, 259 residues long: Snake venom serine protease homolog rhinocerase 3 (259 aa).

Residues Val-1 to Ala-17 form the signal peptide. Positions Gln-18–Leu-23 are excised as a propeptide. One can recognise a Peptidase S1 domain in the interval Val-24–Ala-250. 6 disulfide bridges follow: Cys-30/Cys-164, Cys-51/Cys-67, Cys-99/Cys-257, Cys-143/Cys-211, Cys-175/Cys-190, and Cys-201/Cys-226. The N-linked (GlcNAc...) asparagine glycan is linked to Asn-80. N-linked (GlcNAc...) asparagine glycosylation is present at Asn-252.

The protein belongs to the peptidase S1 family. Snake venom subfamily. Expressed by the venom gland.

The protein resides in the secreted. Snake venom serine protease homolog that may act in the hemostasis system of the prey. The sequence is that of Snake venom serine protease homolog rhinocerase 3 from Bitis rhinoceros (West African gaboon viper).